Reading from the N-terminus, the 447-residue chain is Adenylosuccinate synthetase (447 aa).

GTP-binding positions include Gly-12–Lys-18 and Gly-40–Thr-42. Asp-13 serves as the catalytic Proton acceptor. Asp-13 and Gly-40 together coordinate Mg(2+). Residues Asp-13–Lys-16, Asn-38–His-41, Thr-128, Arg-142, Gln-223, Thr-238, and Arg-302 contribute to the IMP site. His-41 functions as the Proton donor in the catalytic mechanism. Thr-298–Arg-304 serves as a coordination point for substrate. Residues Arg-304, Lys-330 to Asp-332, and Ser-412 to Gly-414 contribute to the GTP site.

Belongs to the adenylosuccinate synthetase family. As to quaternary structure, homodimer. Mg(2+) is required as a cofactor.

It localises to the cytoplasm. The enzyme catalyses IMP + L-aspartate + GTP = N(6)-(1,2-dicarboxyethyl)-AMP + GDP + phosphate + 2 H(+). The protein operates within purine metabolism; AMP biosynthesis via de novo pathway; AMP from IMP: step 1/2. Functionally, plays an important role in the de novo pathway of purine nucleotide biosynthesis. Catalyzes the first committed step in the biosynthesis of AMP from IMP. In Thermosynechococcus vestitus (strain NIES-2133 / IAM M-273 / BP-1), this protein is Adenylosuccinate synthetase.